Here is a 141-residue protein sequence, read N- to C-terminus: ATP synthase epsilon chain (141 aa).

It belongs to the ATPase epsilon chain family. As to quaternary structure, F-type ATPases have 2 components, CF(1) - the catalytic core - and CF(0) - the membrane proton channel. CF(1) has five subunits: alpha(3), beta(3), gamma(1), delta(1), epsilon(1). CF(0) has three main subunits: a, b and c.

It is found in the cell inner membrane. Functionally, produces ATP from ADP in the presence of a proton gradient across the membrane. This chain is ATP synthase epsilon chain, found in Hahella chejuensis (strain KCTC 2396).